The primary structure comprises 557 residues: Dihydroxy-acid dehydratase (557 aa).

Residue aspartate 78 coordinates Mg(2+). Cysteine 119 lines the [2Fe-2S] cluster pocket. Residues aspartate 120 and lysine 121 each coordinate Mg(2+). Residue lysine 121 is modified to N6-carboxylysine. A [2Fe-2S] cluster-binding site is contributed by cysteine 192. Glutamate 442 lines the Mg(2+) pocket. Serine 468 (proton acceptor) is an active-site residue.

Belongs to the IlvD/Edd family. As to quaternary structure, homodimer. The cofactor is [2Fe-2S] cluster. Requires Mg(2+) as cofactor.

It carries out the reaction (2R)-2,3-dihydroxy-3-methylbutanoate = 3-methyl-2-oxobutanoate + H2O. It catalyses the reaction (2R,3R)-2,3-dihydroxy-3-methylpentanoate = (S)-3-methyl-2-oxopentanoate + H2O. It participates in amino-acid biosynthesis; L-isoleucine biosynthesis; L-isoleucine from 2-oxobutanoate: step 3/4. The protein operates within amino-acid biosynthesis; L-valine biosynthesis; L-valine from pyruvate: step 3/4. Functionally, functions in the biosynthesis of branched-chain amino acids. Catalyzes the dehydration of (2R,3R)-2,3-dihydroxy-3-methylpentanoate (2,3-dihydroxy-3-methylvalerate) into 2-oxo-3-methylpentanoate (2-oxo-3-methylvalerate) and of (2R)-2,3-dihydroxy-3-methylbutanoate (2,3-dihydroxyisovalerate) into 2-oxo-3-methylbutanoate (2-oxoisovalerate), the penultimate precursor to L-isoleucine and L-valine, respectively. In Bacillus thuringiensis subsp. konkukian (strain 97-27), this protein is Dihydroxy-acid dehydratase.